The following is a 125-amino-acid chain: Small ribosomal subunit protein bS6 (125 aa).

A disordered region spans residues 96–125 (VTAPSPMMREEKAKSAPQPAEEAKETTLAT). Residues 116–125 (EEAKETTLAT) show a composition bias toward basic and acidic residues.

It belongs to the bacterial ribosomal protein bS6 family.

In terms of biological role, binds together with bS18 to 16S ribosomal RNA. This chain is Small ribosomal subunit protein bS6, found in Nitrosospira multiformis (strain ATCC 25196 / NCIMB 11849 / C 71).